A 352-amino-acid polypeptide reads, in one-letter code: MRADKSLSPFEIRVYRHYRIVHGTRVALAFLLTFLIIRLFTIPESTWPLVTMVVIMGPISFWGNVVPRAFERIGGTVLGSILGLIALQLELISLPLMLVWCAAAMFLCGWLALGKKPYQGLLIGVTLAIVVGSPTGEIDTALWRSGDVILGSLLAMLFTGIWPQRAFIHWRIQLAKSLTEYNRVYQSAFSPNLLERPRLESHLQKLLTDAVKMRGLIAPASKETRIPKSIYEGIQTINRNLVCMLELQINAYWATRPSHFVLLNAQKLRDTQHMMQQILLSLVHALYEGNPQPVFANTEKLNDAVEELRQLLNNHHDLKVVETPIYGYVWLNMETAHQLELLSNLICRALRK.

Topologically, residues 1-25 are cytoplasmic; it reads MRADKSLSPFEIRVYRHYRIVHGTR. The next 2 membrane-spanning stretches (helical) occupy residues 26 to 46 and 47 to 67; these read VALA…PEST and WPLV…NVVP. Arg-68 is a topological domain (cytoplasmic). The chain crosses the membrane as a helical span at residues 69 to 89; it reads AFERIGGTVLGSILGLIALQL. A topological domain (periplasmic) is located at residue Glu-90. Residues 91-111 traverse the membrane as a helical segment; sequence LISLPLMLVWCAAAMFLCGWL. At 112 to 117 the chain is on the cytoplasmic side; it reads ALGKKP. A helical membrane pass occupies residues 118 to 138; the sequence is YQGLLIGVTLAIVVGSPTGEI. Residues 139-147 are Periplasmic-facing; sequence DTALWRSGD. Residues 148–168 traverse the membrane as a helical segment; the sequence is VILGSLLAMLFTGIWPQRAFI. At 169–352 the chain is on the cytoplasmic side; the sequence is HWRIQLAKSL…SNLICRALRK (184 aa).

Its subcellular location is the cell inner membrane. In Escherichia coli (strain K12), this protein is Inner membrane protein YeeA (yeeA).